The following is a 390-amino-acid chain: Methylthioribose-1-phosphate isomerase (390 aa).

Catalysis depends on aspartate 258, which acts as the Proton donor.

The protein belongs to the eIF-2B alpha/beta/delta subunits family. MtnA subfamily.

The protein resides in the cytoplasm. It localises to the nucleus. It carries out the reaction 5-(methylsulfanyl)-alpha-D-ribose 1-phosphate = 5-(methylsulfanyl)-D-ribulose 1-phosphate. Its pathway is amino-acid biosynthesis; L-methionine biosynthesis via salvage pathway; L-methionine from S-methyl-5-thio-alpha-D-ribose 1-phosphate: step 1/6. Functionally, catalyzes the interconversion of methylthioribose-1-phosphate (MTR-1-P) into methylthioribulose-1-phosphate (MTRu-1-P). The protein is Methylthioribose-1-phosphate isomerase of Coccidioides posadasii (strain C735) (Valley fever fungus).